The sequence spans 186 residues: Large ribosomal subunit protein uL22 (186 aa).

Ser-158 carries the phosphoserine modification. A disordered region spans residues 159 to 186 (KATDDEPAKKKLSKKKLQRQKEKMLRSE). Thr-161 bears the Phosphothreonine mark. Over residues 177–186 (RQKEKMLRSE) the composition is skewed to basic and acidic residues.

It belongs to the universal ribosomal protein uL22 family.

The sequence is that of Large ribosomal subunit protein uL22 (RpL17) from Drosophila melanogaster (Fruit fly).